A 57-amino-acid chain; its full sequence is Large ribosomal subunit protein bL32 (57 aa).

A disordered region spans residues 1 to 37; the sequence is MAVQQNKPTRSKRGMRRSHDALTAVTSLSVDKTSGEK.

The protein belongs to the bacterial ribosomal protein bL32 family.

The polypeptide is Large ribosomal subunit protein bL32 (Escherichia fergusonii (strain ATCC 35469 / DSM 13698 / CCUG 18766 / IAM 14443 / JCM 21226 / LMG 7866 / NBRC 102419 / NCTC 12128 / CDC 0568-73)).